The sequence spans 137 residues: Large ribosomal subunit protein uL16c (137 aa).

Belongs to the universal ribosomal protein uL16 family. As to quaternary structure, part of the 50S ribosomal subunit.

The protein localises to the plastid. This is Large ribosomal subunit protein uL16c from Cuscuta reflexa (Southern Asian dodder).